The chain runs to 208 residues: Ypt/Rab-type GTPase YPT7 (208 aa).

Residues 17-23 (SGVGKTS), 33-40 (YSQQYKAT), Gly67, and 126-129 (NKID) contribute to the GTP site. Residues 37 to 45 (YKATIGADF) carry the Effector region motif. Lys147 participates in a covalent cross-link: Glycyl lysine isopeptide (Lys-Gly) (interchain with G-Cter in ubiquitin). Position 158–160 (158–160 (SAK)) interacts with GTP. 2 S-geranylgeranyl cysteine lipidation sites follow: Cys206 and Cys208. At Cys208 the chain carries Cysteine methyl ester.

Belongs to the small GTPase superfamily. Rab family. In terms of assembly, interacts with IVY1. Interacts with YIF1, YIP4 and YIP5. Interacts with the HOPS complex. Interacts with the class C-Vps complex. Interacts with VPS35. Interacts with VPS39. Interacts with the GDP dissociation inhibitor GDI1. Interacts with CCZ1.

The protein resides in the late endosome. It is found in the vacuole membrane. With respect to regulation, rab activation is generally mediated by a guanine exchange factor (GEF), while inactivation through hydrolysis of bound GTP is catalyzed by a GTPase activating protein (GAP). YPT7 is activated by GEFs MON1-CCZ1 complex (MC1) and VAM6/VPS39, and inactivated by GAPs GYP7 and GYP1. Its function is as follows. Ypt/Rab-type GTPases are key regulators of membrane trafficking and intracellular vesicular transport. They act as molecular switches that convert between GTP-bound and GDP-bound states, and regulate virtually all steps of membrane traffic from the formation of the transport vesicle at the donor membrane to its fusion at the target membrane. In the GDP-bound state, Ypt proteins are predominantly cytosolic, solubilized through the interaction with a GDP dissociation inhibitor (GDI). In the GTP-bound state, the proteins are membrane bound and interact with specific effector proteins that select cargo, promote vesicle movement, or verify the correct site of fusion. Involved in regulation of vesicular protein transport in exo- and endocytosis. Involved in regulation of late endosome to vacuole trafficking and homotypic vacuole fusion, by interacting in its GTP-bound state on the donor membrane with the large multiprotein HOPS/class C-Vps tethering complex on the acceptor membrane. Involved in retromer assembly and cargo export, recognizing the cargo selection complex (CSC). GTP-bound YPT7 recruits CSC to vacuolar membranes via retromer subunit VPS35. Interacts with the HOPS complex subunit VPS39 independent of the HOPS complex at mitochondria-vacuole contact sites (vCLAMPs), providing a physical and metabolic interconnection between the endocytic pathway and mitochondria. The sequence is that of Ypt/Rab-type GTPase YPT7 (YPT7) from Saccharomyces cerevisiae (strain ATCC 204508 / S288c) (Baker's yeast).